A 461-amino-acid polypeptide reads, in one-letter code: Homocitrate synthase (461 aa).

In terms of domain architecture, Pyruvate carboxyltransferase spans V4–Q259. R12 is a 2-oxoglutarate binding site. E13 is a binding site for Mg(2+). 3 residues coordinate 2-oxoglutarate: H76, R136, and T170. The Mg(2+) site is built by H198 and H200. The active-site Proton acceptor is the H292.

The protein belongs to the alpha-IPM synthase/homocitrate synthase family. Homocitrate synthase LYS20/LYS21 subfamily. Requires Mg(2+) as cofactor. Mn(2+) is required as a cofactor.

It carries out the reaction acetyl-CoA + 2-oxoglutarate + H2O = (2R)-homocitrate + CoA + H(+). It participates in amino-acid biosynthesis; L-lysine biosynthesis via AAA pathway; L-alpha-aminoadipate from 2-oxoglutarate: step 1/5. Catalyzes the aldol-type condensation of 2-oxoglutarate with acetyl-CoA to yield homocitrate. Carries out the first step of the alpha-aminoadipate (AAA) lysine biosynthesis pathway. The sequence is that of Homocitrate synthase from Saccharolobus islandicus (strain L.S.2.15 / Lassen #1) (Sulfolobus islandicus).